A 553-amino-acid polypeptide reads, in one-letter code: Methionine--tRNA ligase (553 aa).

The short motif at 12–22 (PYANSQLHLGH) is the 'HIGH' region element. Zn(2+) is bound by residues Cys-144, Cys-147, Cys-157, and Cys-160. Residues 332 to 336 (KFSKS) carry the 'KMSKS' region motif. Lys-335 contacts ATP.

This sequence belongs to the class-I aminoacyl-tRNA synthetase family. MetG type 1 subfamily. In terms of assembly, monomer. Requires Zn(2+) as cofactor.

The protein localises to the cytoplasm. The enzyme catalyses tRNA(Met) + L-methionine + ATP = L-methionyl-tRNA(Met) + AMP + diphosphate. Its function is as follows. Is required not only for elongation of protein synthesis but also for the initiation of all mRNA translation through initiator tRNA(fMet) aminoacylation. The polypeptide is Methionine--tRNA ligase (Dehalococcoides mccartyi (strain CBDB1)).